Reading from the N-terminus, the 320-residue chain is Malate dehydrogenase (320 aa).

Residues 10 to 15 (GSGMIG) and Asp34 contribute to the NAD(+) site. The substrate site is built by Arg83 and Arg89. Residues Asn96 and 119–121 (ITN) contribute to the NAD(+) site. Substrate-binding residues include Asn121 and Arg152. His176 (proton acceptor) is an active-site residue.

The protein belongs to the LDH/MDH superfamily. MDH type 3 family.

The catalysed reaction is (S)-malate + NAD(+) = oxaloacetate + NADH + H(+). In terms of biological role, catalyzes the reversible oxidation of malate to oxaloacetate. This Rhizobium johnstonii (strain DSM 114642 / LMG 32736 / 3841) (Rhizobium leguminosarum bv. viciae) protein is Malate dehydrogenase.